Reading from the N-terminus, the 435-residue chain is UDP-N-acetylmuramate--L-alanine ligase (435 aa).

108-114 (GAHGKST) is a binding site for ATP.

It belongs to the MurCDEF family.

The protein resides in the cytoplasm. The enzyme catalyses UDP-N-acetyl-alpha-D-muramate + L-alanine + ATP = UDP-N-acetyl-alpha-D-muramoyl-L-alanine + ADP + phosphate + H(+). Its pathway is cell wall biogenesis; peptidoglycan biosynthesis. Functionally, cell wall formation. The polypeptide is UDP-N-acetylmuramate--L-alanine ligase (Campylobacter curvus (strain 525.92)).